Reading from the N-terminus, the 226-residue chain is uncharacterized protein (226 aa).

Residues 5–25 form a helical membrane-spanning segment; sequence IKTVSFAAAAILVVIICTFLI.

The protein resides in the cell membrane. This is an uncharacterized protein from Bacillus subtilis (strain 168).